The chain runs to 696 residues: Methionine--tRNA ligase (696 aa).

Positions 12–22 match the 'HIGH' region motif; the sequence is PYANGPLHLGH. Positions 143, 146, 156, and 159 each coordinate Zn(2+). Residues 330-334 carry the 'KMSKS' region motif; that stretch reads KMSKS. Residue K333 participates in ATP binding. The region spanning 593–696 is the tRNA-binding domain; that stretch reads DFAKLDLRIG…AGAQPGMPVR (104 aa).

It belongs to the class-I aminoacyl-tRNA synthetase family. MetG type 1 subfamily. As to quaternary structure, homodimer. Zn(2+) serves as cofactor.

It is found in the cytoplasm. It carries out the reaction tRNA(Met) + L-methionine + ATP = L-methionyl-tRNA(Met) + AMP + diphosphate. In terms of biological role, is required not only for elongation of protein synthesis but also for the initiation of all mRNA translation through initiator tRNA(fMet) aminoacylation. This Xanthomonas campestris pv. campestris (strain 8004) protein is Methionine--tRNA ligase.